The sequence spans 295 residues: Reticulon-like protein 1 (295 aa).

The Cytoplasmic portion of the chain corresponds to 1–50 (MSASAQHSQAQQQQQQKSCNCDLLLWRNPVQTGKYFGGSLLALLILKKVN). Residues 20–220 (NCDLLLWRNP…ISNLVKSKTA (201 aa)) enclose the Reticulon domain. The helical transmembrane segment at 51 to 73 (LITFFLKVAYTILFTTGSIEFVS) threads the bilayer. Residues 74 to 142 (KLFLGQGLIT…ALFLLHKFFS (69 aa)) lie on the Lumenal side of the membrane. The chain crosses the membrane as a helical span at residues 143-163 (WFSIWTIVFVADIFTFTLPVI). Residues 164–295 (YHSYKHEIDA…LQNELEKNNA (132 aa)) are Cytoplasmic-facing. 2 positions are modified to phosphothreonine: threonine 186 and threonine 219. Over residues 219–235 (TAPVSSTAGPQTASTSK) the composition is skewed to polar residues. Residues 219–295 (TAPVSSTAGP…LQNELEKNNA (77 aa)) are disordered. Phosphoserine is present on serine 232. The stretch at 265-295 (STTQEFNVDELSNELKKSTKNLQNELEKNNA) forms a coiled coil.

Interacts with POM33.

It localises to the endoplasmic reticulum membrane. This chain is Reticulon-like protein 1 (RTN1), found in Saccharomyces cerevisiae (strain ATCC 204508 / S288c) (Baker's yeast).